A 453-amino-acid chain; its full sequence is uncharacterized protein (453 aa).

This sequence to S.faecalis plasmid PAM373 EP0012.

This is an uncharacterized protein from Listeria innocua serovar 6a (strain ATCC BAA-680 / CLIP 11262).